Consider the following 671-residue polypeptide: DNA ligase (671 aa).

Residues 32 to 36 (DAEYD), 81 to 82 (SL), and E113 each bind NAD(+). K115 (N6-AMP-lysine intermediate) is an active-site residue. NAD(+) is bound by residues R136, E173, K290, and K314. 4 residues coordinate Zn(2+): C408, C411, C426, and C432. Residues 593–671 (EIDSPFAGKT…ETEMLRLLGS (79 aa)) enclose the BRCT domain.

Belongs to the NAD-dependent DNA ligase family. LigA subfamily. The cofactor is Mg(2+). Mn(2+) serves as cofactor.

The catalysed reaction is NAD(+) + (deoxyribonucleotide)n-3'-hydroxyl + 5'-phospho-(deoxyribonucleotide)m = (deoxyribonucleotide)n+m + AMP + beta-nicotinamide D-nucleotide.. DNA ligase that catalyzes the formation of phosphodiester linkages between 5'-phosphoryl and 3'-hydroxyl groups in double-stranded DNA using NAD as a coenzyme and as the energy source for the reaction. It is essential for DNA replication and repair of damaged DNA. The sequence is that of DNA ligase from Escherichia coli O81 (strain ED1a).